A 1024-amino-acid chain; its full sequence is MKATLYENINVNKSMIDINNEILNYWKENHIDENIIKSNRNLKPFAFLEGPPTANGRPHVGHLMTRAVKDTVMRYKYMTGHDILRRTGGWDCHGLPVELEAEKHFGFKNKKDIENFGIEKFNQYCRDSVFRYIDEWNIVDDLVGFWVDKENSYITLKNDYMESEWWALKTLYENNLLVKDYKIVPYCPRCGTSLSSHEVAQGYKNVDDPSVFVKFAEKGRKNRYFIAWTTTPWTLPSNEFLVVNPDMDYSLIESDGFEYYLLSSKVESLFNDYKLIKTFKGRDLEGIEYEQLMPFLEKPENAFRVVAASFVTAEDGTGIVHAAPAFGADDFEIGKRFSVEILNPVDQDGRFNEKLPWSGLFVTDANKSIINYLKENNLLFKAETMKHDYPFCYRCGTRLLYYPLDTWFIKVSLIRKKLLENNEKINWVPDYLKNGRFGNFLEEAKDWALSRDRYWGTPLPIWRCNKNHYLAIGSRDDLLKYGGYIPEDLHRPYIDDVVLKCPECGSEMHRESYVIDTWFDSGSASYAAMHYPFSKDFTKSHFPVDFITEAIDQTRGWFYTLHVVASLLFDENAYKNVVSISHILDENGQKMSKSKGNFIAAIDFLNDYGADAARMFFFTGAPWNSKSVNKKLIGEITRKNLSTLLNVYSFFASNANIDEYRFTEIKEPENLLDRWMLSRLNTTIIKVRENMDNYNIHTALRYIEDLISELSNVYLRLSRKRFWEGNLDDSKERAYSTLYYTLRETIKMMAPITPFFSEYLYQKLSPGMPSVHMESYPEAIERFIDNDLENEMEHAIEIMELSRRTRQELNIKGRQPVKEILIYSDIKLRDDIIDIISPELNAESIRFIKSDEMPLKITVRADISKVAKLLKSRINDFNLYLERNNDLVYRELKSKGKINFDGIYLTDDMFIMNEEVNGNYGFNKDERSGIYLFINREIDNDLLLEGYAREIIRRIQVMRKDLNLEYSEKIKTYIDADEDIRSAVERYMEKIKNETLSSEILFKNDPEARAWDIDDKTVYIKIVK.

Positions 52-62 (PTANGRPHVGH) match the 'HIGH' region motif. Positions 590–594 (KMSKS) match the 'KMSKS' region motif. An ATP-binding site is contributed by Lys593.

It belongs to the class-I aminoacyl-tRNA synthetase family. IleS type 2 subfamily. In terms of assembly, monomer. The cofactor is Zn(2+).

It is found in the cytoplasm. The enzyme catalyses tRNA(Ile) + L-isoleucine + ATP = L-isoleucyl-tRNA(Ile) + AMP + diphosphate. Catalyzes the attachment of isoleucine to tRNA(Ile). As IleRS can inadvertently accommodate and process structurally similar amino acids such as valine, to avoid such errors it has two additional distinct tRNA(Ile)-dependent editing activities. One activity is designated as 'pretransfer' editing and involves the hydrolysis of activated Val-AMP. The other activity is designated 'posttransfer' editing and involves deacylation of mischarged Val-tRNA(Ile). The polypeptide is Isoleucine--tRNA ligase (Picrophilus torridus (strain ATCC 700027 / DSM 9790 / JCM 10055 / NBRC 100828 / KAW 2/3)).